Consider the following 285-residue polypeptide: Diphthine methyl ester synthase (285 aa).

Residues Leu-9, Asp-84, Gly-87, 112 to 113 (SI), and Leu-163 contribute to the S-adenosyl-L-methionine site. Ser-171 is modified (phosphoserine). 2 residues coordinate S-adenosyl-L-methionine: Val-225 and His-250.

This sequence belongs to the diphthine synthase family.

The enzyme catalyses 2-[(3S)-amino-3-carboxypropyl]-L-histidyl-[translation elongation factor 2] + 4 S-adenosyl-L-methionine = diphthine methyl ester-[translation elongation factor 2] + 4 S-adenosyl-L-homocysteine + 3 H(+). Its pathway is protein modification; peptidyl-diphthamide biosynthesis. S-adenosyl-L-methionine-dependent methyltransferase that catalyzes four methylations of the modified target histidine residue in translation elongation factor 2 (EF-2), to form an intermediate called diphthine methyl ester. The four successive methylation reactions represent the second step of diphthamide biosynthesis. The chain is Diphthine methyl ester synthase (DPH5) from Bos taurus (Bovine).